Here is a 545-residue protein sequence, read N- to C-terminus: Chaperonin GroEL (545 aa).

ATP-binding positions include 30 to 33 (TLGP), K51, 87 to 91 (DGTTT), G415, and D495.

The protein belongs to the chaperonin (HSP60) family. In terms of assembly, forms a cylinder of 14 subunits composed of two heptameric rings stacked back-to-back. Interacts with the co-chaperonin GroES.

The protein resides in the cytoplasm. The enzyme catalyses ATP + H2O + a folded polypeptide = ADP + phosphate + an unfolded polypeptide.. Its function is as follows. Together with its co-chaperonin GroES, plays an essential role in assisting protein folding. The GroEL-GroES system forms a nano-cage that allows encapsulation of the non-native substrate proteins and provides a physical environment optimized to promote and accelerate protein folding. This chain is Chaperonin GroEL, found in Shewanella sp. (strain W3-18-1).